A 143-amino-acid chain; its full sequence is Small ribosomal subunit protein bS6 (143 aa).

The interval 97–143 (DTEQSLIMKSKDEKGDKHERSERRRRDDEEGDVPAATDTDGDNAEAA) is disordered. Over residues 105 to 124 (KSKDEKGDKHERSERRRRDD) the composition is skewed to basic and acidic residues.

Belongs to the bacterial ribosomal protein bS6 family.

Functionally, binds together with bS18 to 16S ribosomal RNA. The chain is Small ribosomal subunit protein bS6 from Xanthomonas oryzae pv. oryzae (strain MAFF 311018).